We begin with the raw amino-acid sequence, 275 residues long: Nitrogenase iron protein 2 (275 aa).

9–16 (GKGGIGKS) is a binding site for ATP. Cysteine 97 contributes to the [4Fe-4S] cluster binding site. Residue arginine 100 is modified to ADP-ribosylarginine; by dinitrogenase reductase ADP-ribosyltransferase. [4Fe-4S] cluster is bound at residue cysteine 132.

It belongs to the NifH/BchL/ChlL family. As to quaternary structure, homodimer. [4Fe-4S] cluster is required as a cofactor. Post-translationally, the reversible ADP-ribosylation of Arg-100 inactivates the nitrogenase reductase and regulates nitrogenase activity.

It catalyses the reaction N2 + 8 reduced [2Fe-2S]-[ferredoxin] + 16 ATP + 16 H2O = H2 + 8 oxidized [2Fe-2S]-[ferredoxin] + 2 NH4(+) + 16 ADP + 16 phosphate + 6 H(+). Functionally, the key enzymatic reactions in nitrogen fixation are catalyzed by the nitrogenase complex, which has 2 components: the iron protein (component 2) and a component 1 which is either a molybdenum-iron protein, a vanadium-iron, or an iron-iron protein. This Rhodobacter capsulatus (Rhodopseudomonas capsulata) protein is Nitrogenase iron protein 2 (anfH).